A 430-amino-acid polypeptide reads, in one-letter code: Adenylosuccinate synthetase (430 aa).

Residues 12–18 (GDEGKGK) and 40–42 (GHT) contribute to the GTP site. The active-site Proton acceptor is aspartate 13. Mg(2+)-binding residues include aspartate 13 and glycine 40. IMP contacts are provided by residues 13-16 (DEGK), 38-41 (NAGH), threonine 130, arginine 144, glutamine 224, threonine 239, and arginine 303. Catalysis depends on histidine 41, which acts as the Proton donor. 299–305 (VNTGRKR) is a substrate binding site. GTP-binding positions include arginine 305, 331–333 (KLD), and 413–415 (STS).

It belongs to the adenylosuccinate synthetase family. In terms of assembly, homodimer. It depends on Mg(2+) as a cofactor.

It localises to the cytoplasm. It carries out the reaction IMP + L-aspartate + GTP = N(6)-(1,2-dicarboxyethyl)-AMP + GDP + phosphate + 2 H(+). It functions in the pathway purine metabolism; AMP biosynthesis via de novo pathway; AMP from IMP: step 1/2. In terms of biological role, plays an important role in the de novo pathway of purine nucleotide biosynthesis. Catalyzes the first committed step in the biosynthesis of AMP from IMP. The protein is Adenylosuccinate synthetase of Nitrobacter winogradskyi (strain ATCC 25391 / DSM 10237 / CIP 104748 / NCIMB 11846 / Nb-255).